A 635-amino-acid polypeptide reads, in one-letter code: Extracellular metalloproteinase 1 (635 aa).

The first 19 residues, 1-19 (MHGLLLAAGLLSLPLHVLA), serve as a signal peptide directing secretion. Positions 20-246 (HPQPSTSTSL…VHNVVDYVAH (227 aa)) are excised as a propeptide. A glycan (N-linked (GlcNAc...) asparagine) is linked at asparagine 287. Histidine 430 contacts Zn(2+). The active site involves glutamate 431. Histidine 434 is a Zn(2+) binding site. 3 N-linked (GlcNAc...) asparagine glycosylation sites follow: asparagine 475, asparagine 594, and asparagine 623.

The protein belongs to the peptidase M36 family. The cofactor is Zn(2+).

The protein localises to the secreted. Functionally, secreted metalloproteinase probably acting as a virulence factor. The polypeptide is Extracellular metalloproteinase 1 (MEP1) (Arthroderma benhamiae (Trichophyton mentagrophytes)).